Reading from the N-terminus, the 284-residue chain is Probable tRNA-splicing endonuclease subunit sen34 (284 aa).

Active-site residues include tyrosine 206, histidine 214, and lysine 245.

Belongs to the tRNA-intron endonuclease family. In terms of assembly, heterotetramer composed of sen2, sen15, sen34 and sen54. Interacts directly with sen15.

The enzyme catalyses pretRNA = a 3'-half-tRNA molecule with a 5'-OH end + a 5'-half-tRNA molecule with a 2',3'-cyclic phosphate end + an intron with a 2',3'-cyclic phosphate and a 5'-hydroxyl terminus.. Its function is as follows. Constitutes one of the two catalytic subunit of the tRNA-splicing endonuclease complex, a complex responsible for identification and cleavage of the splice sites in pre-tRNA. It cleaves pre-tRNA at the 5'- and 3'-splice sites to release the intron. The products are an intron and two tRNA half-molecules bearing 2',3'-cyclic phosphate and 5'-OH termini. There are no conserved sequences at the splice sites, but the intron is invariably located at the same site in the gene, placing the splice sites an invariant distance from the constant structural features of the tRNA body. It probably carries the active site for 3'-splice site cleavage. The chain is Probable tRNA-splicing endonuclease subunit sen34 (sen34) from Schizosaccharomyces pombe (strain 972 / ATCC 24843) (Fission yeast).